The primary structure comprises 319 residues: Beta-ketoacyl-[acyl-carrier-protein] synthase III (319 aa).

Residues C110 and H246 contribute to the active site. Positions 247–251 (QANYR) are ACP-binding. Residue N276 is part of the active site.

It belongs to the thiolase-like superfamily. FabH family. As to quaternary structure, homodimer.

It is found in the cytoplasm. The catalysed reaction is malonyl-[ACP] + acetyl-CoA + H(+) = 3-oxobutanoyl-[ACP] + CO2 + CoA. It participates in lipid metabolism; fatty acid biosynthesis. In terms of biological role, catalyzes the condensation reaction of fatty acid synthesis by the addition to an acyl acceptor of two carbons from malonyl-ACP. Catalyzes the first condensation reaction which initiates fatty acid synthesis and may therefore play a role in governing the total rate of fatty acid production. Possesses both acetoacetyl-ACP synthase and acetyl transacylase activities. Its substrate specificity determines the biosynthesis of branched-chain and/or straight-chain of fatty acids. The protein is Beta-ketoacyl-[acyl-carrier-protein] synthase III of Lactobacillus delbrueckii subsp. bulgaricus (strain ATCC 11842 / DSM 20081 / BCRC 10696 / JCM 1002 / NBRC 13953 / NCIMB 11778 / NCTC 12712 / WDCM 00102 / Lb 14).